The sequence spans 227 residues: Cytochrome c oxidase subunit 2 (227 aa).

Topologically, residues 1–26 (MATWSNLSIQDGASPLMEQLSFFHDD) are mitochondrial intermembrane. Residues 27-48 (HTMVVLLITVIVGYALSYMLFN) form a helical membrane-spanning segment. At 49–62 (AYTNRNMLHGHLIE) the chain is on the mitochondrial matrix side. Residues 63-82 (TIWTALPAITLIFIALPSLR) form a helical membrane-spanning segment. Over 83–227 (LLYLLDDSVD…LFIKWLSKMI (145 aa)) the chain is Mitochondrial intermembrane. 6 residues coordinate Cu cation: histidine 161, cysteine 196, glutamate 198, cysteine 200, histidine 204, and methionine 207. Glutamate 198 contributes to the Mg(2+) binding site.

The protein belongs to the cytochrome c oxidase subunit 2 family. Component of the cytochrome c oxidase (complex IV, CIV), a multisubunit enzyme composed of a catalytic core of 3 subunits and several supernumerary subunits. The complex exists as a monomer or a dimer and forms supercomplexes (SCs) in the inner mitochondrial membrane with ubiquinol-cytochrome c oxidoreductase (cytochrome b-c1 complex, complex III, CIII). The cofactor is Cu cation.

It localises to the mitochondrion inner membrane. The enzyme catalyses 4 Fe(II)-[cytochrome c] + O2 + 8 H(+)(in) = 4 Fe(III)-[cytochrome c] + 2 H2O + 4 H(+)(out). Component of the cytochrome c oxidase, the last enzyme in the mitochondrial electron transport chain which drives oxidative phosphorylation. The respiratory chain contains 3 multisubunit complexes succinate dehydrogenase (complex II, CII), ubiquinol-cytochrome c oxidoreductase (cytochrome b-c1 complex, complex III, CIII) and cytochrome c oxidase (complex IV, CIV), that cooperate to transfer electrons derived from NADH and succinate to molecular oxygen, creating an electrochemical gradient over the inner membrane that drives transmembrane transport and the ATP synthase. Cytochrome c oxidase is the component of the respiratory chain that catalyzes the reduction of oxygen to water. Electrons originating from reduced cytochrome c in the intermembrane space (IMS) are transferred via the dinuclear copper A center (CU(A)) of subunit 2 and heme A of subunit 1 to the active site in subunit 1, a binuclear center (BNC) formed by heme A3 and copper B (CU(B)). The BNC reduces molecular oxygen to 2 water molecules using 4 electrons from cytochrome c in the IMS and 4 protons from the mitochondrial matrix. This chain is Cytochrome c oxidase subunit 2 (COII), found in Schistocerca gregaria (Desert locust).